The sequence spans 110 residues: Evasin P1166 (110 aa).

The first 24 residues, 1 to 24 (MEVKIFTLLQIALFIALGIHLVVA), serve as a signal peptide directing secretion. Disulfide bonds link C45–C67, C49–C69, and C60–C80. N48 carries N-linked (GlcNAc...) asparagine glycosylation. Residues 89 to 110 (SEYPNPKSSEIDAAAPLPRETH) are disordered.

The protein localises to the secreted. Its function is as follows. Salivary chemokine-binding protein which binds to host chemokines CXCL1, CXCL2 and CXCL8. This is Evasin P1166 from Ixodes ricinus (Common tick).